Reading from the N-terminus, the 293-residue chain is RNA pseudouridylate synthase domain-containing protein 1 (293 aa).

Aspartate 67 is an active-site residue.

This sequence belongs to the pseudouridine synthase RluA family.

The chain is RNA pseudouridylate synthase domain-containing protein 1 (rpusd1) from Danio rerio (Zebrafish).